Here is a 255-residue protein sequence, read N- to C-terminus: MRILCTNDDGIHAPGLKVVEEIARALSDDVWVVAPELDQSGVSHSLSLNDPLRLREVGPRHFAVRGTPTDCVIMGARHILADKAPDLVLSGVNRGRNVAEDVVYSGTIAGALEGTILGLPSFALSQEFTLETRNAPLWDTAKAHGPEILRKAIKAGVPKNTVININFPACAPDEVAGVMVTRQGKRNQGFLRIDERHDGRGNPYFWIGFERIAVVDMPAEGTDLAALAAKYVSVTPLRLDRTDEAFSATLAKTLG.

4 residues coordinate a divalent metal cation: Asp8, Asp9, Ser40, and Asn93.

The protein belongs to the SurE nucleotidase family. A divalent metal cation is required as a cofactor.

The protein localises to the cytoplasm. The catalysed reaction is a ribonucleoside 5'-phosphate + H2O = a ribonucleoside + phosphate. Its function is as follows. Nucleotidase that shows phosphatase activity on nucleoside 5'-monophosphates. This chain is 5'-nucleotidase SurE, found in Rhodopseudomonas palustris (strain BisB5).